Here is a 366-residue protein sequence, read N- to C-terminus: Chorismate synthase (366 aa).

Arginine 48 serves as a coordination point for NADP(+). Residues 131–133, 243–244, glycine 288, 303–307, and arginine 329 each bind FMN; these read RAS, NA, and KPTSS.

This sequence belongs to the chorismate synthase family. Homotetramer. Requires FMNH2 as cofactor.

It carries out the reaction 5-O-(1-carboxyvinyl)-3-phosphoshikimate = chorismate + phosphate. It functions in the pathway metabolic intermediate biosynthesis; chorismate biosynthesis; chorismate from D-erythrose 4-phosphate and phosphoenolpyruvate: step 7/7. Catalyzes the anti-1,4-elimination of the C-3 phosphate and the C-6 proR hydrogen from 5-enolpyruvylshikimate-3-phosphate (EPSP) to yield chorismate, which is the branch point compound that serves as the starting substrate for the three terminal pathways of aromatic amino acid biosynthesis. This reaction introduces a second double bond into the aromatic ring system. The polypeptide is Chorismate synthase (Bartonella henselae (strain ATCC 49882 / DSM 28221 / CCUG 30454 / Houston 1) (Rochalimaea henselae)).